We begin with the raw amino-acid sequence, 1256 residues long: MSVLPFVRGVDFTKNDFSATFPSSMRQMSRVQWLTLDRTQLAEIPEELGHLQKLEHLSLNHNRLEKIFGELTELSCLRSLDLRHNQLKNSGIPPELFHLEELTTLDLSHNKLKEVPEGLERAKNLIVLNLSNNQIESIPTPLFIHLTDLLFLDLSHNRLETLPPQTRRLINLKTLDLSHNPLELFQLRQLPSLQSLEVLKMSGTQRTLLNFPTSIDSLANLCELDLSHNSLPKLPDCVYNVVTLVRLNLSDNELTELTAGVELWQRLESLNLSRNQLVALPAALCKLPKLRRLLVNDNKLNFEGIPSGIGKLGALEVFSAANNLLEMVPEGLCRCGALKQLNLSCNRLITLPDAIHLLEGLDQLDLRNNPELVMPPKPSEASKATSLEFYNIDFSLQTQLRLAGAAVPPSMPSSATPKDSTARKIRLRRGPRSEGDQDAAKVLKGMKDVAKDKDNEAGAVPEDGKPESLKPKRWDESLEKPQLDYSKFFEKDDGQLPGLTIWEIENFLPNKIEEVVHGKFYEGDCYIVLKTKFDDLGLLDWEIFFWIGNEATLDKRACAAIHAVNLRNFLGARCRTVREEQGDESEQFLSLFETEVIYIEGGRTATGFYTIEEMIHITRLYLVHAYGATIHLEPVAPAITSLDPRHAFVLDLGTHIYIWMGERSKNTLNSKARLMAEKISKTERKNKCEIQLERQGEESAEFWQGLGMTSEEADAAEPPKEHVPEDYQPVQPRLYQVQLGMGYLELPQVELPEQKLCHTLLNSKHVYILDCYTDLFVWFGKKSTRLVRAAAVKLSRELFNMMDRPDYALVMRVPEGNEMQIFRTKFAGWDEVMAVDFTRTAKSVAKTGANLTQWARQQETRTDLAALFMPRQSAMPLAEAEQLEEEWNYDLEMMEAFVLENKKFVRLPEEELGRFYTGECYVFLCRYCIPIEEPENGSEDGANPAADVSKSSANNQPEDEIQCVVYFWQGRNAGNMGWLTFTFTLQKKFKAMFGEELEVVRIFQQQENLKFMSHFKRKFIIHTGKRKDKAHTAKGKSPVEFFHLRSNGGALTTRLIQINPDAVHLNSTFCYILHVPFETEDDSQSGIVYVWIGSKACNEEAKLVQDIAEQMFNSPWVSLQILNEGDEPENFFWVALGGRKPYDTDAEYMNYTRLFRCSNERGYYTVAEKCADFCQDDLADDDIMILDNGEHVFLWMGPRCSEVEVKLAYKSAQVYIQHMRIKQPERPRKLFLTMKNKESRRFTKCFHGWSAFKVYL.

15 LRR repeats span residues 4–28 (LPFV…MRQM), 29–51 (SRVQ…LGHL), 52–74 (QKLE…LTEL), 75–99 (SCLR…LFHL), 100–122 (EELT…LERA), 124–145 (NLIV…LFIH), 147–169 (TDLL…TRRL), 171–192 (NLKT…QLPS), 218–241 (LANL…VYNV), 243–264 (TLVR…VELW), 265–287 (QRLE…LCKL), 289–312 (KLRR…IGKL), 313–335 (GALE…LCRC), 336–358 (GALK…IHLL), and 360–381 (GLDQ…PSEA). The segment at 405–476 (AAVPPSMPSS…ESLKPKRWDE (72 aa)) is disordered. Positions 431-476 (PRSEGDQDAAKVLKGMKDVAKDKDNEAGAVPEDGKPESLKPKRWDE) are enriched in basic and acidic residues. 4 Gelsolin-like repeats span residues 512-589 (IEEV…EQFL), 633-703 (EPVA…AEFW), 749-822 (VELP…MQIF), and 1168-1242 (EKCA…SRRF).

It belongs to the villin/gelsolin family. As to expression, found in ovaries, larval fat bodies, brain and adult thorax.

Its function is as follows. May play a key role in embryonic cellularization by interacting with both the cytoskeleton and other cellular components. Alternatively, it may play a structural role in indirect flight muscle. Vital for embryonic development. The chain is Protein flightless-1 (fliI) from Drosophila melanogaster (Fruit fly).